Reading from the N-terminus, the 262-residue chain is Kallikrein-1 (262 aa).

The N-terminal stretch at Met1–Ala18 is a signal peptide. Positions Pro19–Arg24 are cleaved as a propeptide — activation peptide. The Peptidase S1 domain maps to Ile25–Ala259. Cystine bridges form between Cys31/Cys174, Cys50/Cys66, Cys153/Cys220, Cys185/Cys199, and Cys210/Cys235. His65 acts as the Charge relay system in catalysis. O-linked (GalNAc...) serine glycosylation is present at Ser93. A glycan (N-linked (GlcNAc...) asparagine) is linked at Asn102. A glycan (O-linked (GalNAc...) serine) is linked at Ser104. N-linked (GlcNAc...) asparagine glycosylation occurs at Asn108. Catalysis depends on Asp120, which acts as the Charge relay system. Asn165 carries an N-linked (GlcNAc...) asparagine; partial glycan. O-linked (GalNAc...) serine glycosylation occurs at Ser167. Ser214 (charge relay system) is an active-site residue.

This sequence belongs to the peptidase S1 family. Kallikrein subfamily. Post-translationally, the O-linked polysaccharides on Ser-93, Ser-104 and Ser-167 are probably the mucin type linked to GalNAc. In PubMed:3163150, GalNAc was detected with the corresponding peptides but not located. Isoform 2 is expressed in pancreas, salivary glands, kidney, colon, prostate gland, testis, spleen and the colon adenocarcinoma cell line T84.

The enzyme catalyses Preferential cleavage of Arg-|-Xaa bonds in small molecule substrates. Highly selective action to release kallidin (lysyl-bradykinin) from kininogen involves hydrolysis of Met-|-Xaa or Leu-|-Xaa.. Glandular kallikreins cleave Met-Lys and Arg-Ser bonds in kininogen to release Lys-bradykinin. Functionally, (Microbial infection) Cleaves Neisseria meningitidis NHBA in saliva; Neisseria is an obligate commensal of the nasopharyngeal mucosa. The polypeptide is Kallikrein-1 (KLK1) (Homo sapiens (Human)).